The sequence spans 522 residues: BTB/POZ domain-containing protein 3 (522 aa).

The segment at 25 to 44 is disordered; it reads RSKKSSKKANTSSSSSNSSK. Low complexity predominate over residues 32-44; it reads KANTSSSSSNSSK. One can recognise a BTB domain in the interval 120–190; the sequence is ADVHFVVGPP…IYCDEIDLAA (71 aa). Residues 235-300 form the BACK domain; that stretch reads FEEPDLTQRC…NWAEVECQRQ (66 aa).

It localises to the cytoplasm. The protein localises to the cytosol. It is found in the nucleus. Acts as a key regulator of dendritic field orientation during development of sensory cortex. Also directs dendrites toward active axon terminals when ectopically expressed. This is BTB/POZ domain-containing protein 3 (BTBD3) from Homo sapiens (Human).